The following is a 190-amino-acid chain: Ribosome maturation factor RimM (190 aa).

One can recognise a PRC barrel domain in the interval 95 to 177 (EDDEFFYTDL…AGLIDSPDDL (83 aa)). The tract at residues 170-190 (LIDSPDDLTGKPPKPPGKTKE) is disordered. Pro residues predominate over residues 181–190 (PPKPPGKTKE).

It belongs to the RimM family. In terms of assembly, binds ribosomal protein uS19.

It is found in the cytoplasm. Its function is as follows. An accessory protein needed during the final step in the assembly of 30S ribosomal subunit, possibly for assembly of the head region. Essential for efficient processing of 16S rRNA. May be needed both before and after RbfA during the maturation of 16S rRNA. It has affinity for free ribosomal 30S subunits but not for 70S ribosomes. The sequence is that of Ribosome maturation factor RimM from Rhizobium rhizogenes (strain K84 / ATCC BAA-868) (Agrobacterium radiobacter).